The primary structure comprises 331 residues: Ribose-phosphate pyrophosphokinase (331 aa).

Position 55 to 57 (55 to 57 (DGE)) interacts with ATP. His148 and Asp187 together coordinate Mg(2+). Lys211 is an active-site residue. D-ribose 5-phosphate is bound by residues Arg213, Asp237, and 241 to 245 (DTGGT).

Belongs to the ribose-phosphate pyrophosphokinase family. Class I subfamily. Homohexamer. It depends on Mg(2+) as a cofactor.

Its subcellular location is the cytoplasm. The enzyme catalyses D-ribose 5-phosphate + ATP = 5-phospho-alpha-D-ribose 1-diphosphate + AMP + H(+). Its pathway is metabolic intermediate biosynthesis; 5-phospho-alpha-D-ribose 1-diphosphate biosynthesis; 5-phospho-alpha-D-ribose 1-diphosphate from D-ribose 5-phosphate (route I): step 1/1. Involved in the biosynthesis of the central metabolite phospho-alpha-D-ribosyl-1-pyrophosphate (PRPP) via the transfer of pyrophosphoryl group from ATP to 1-hydroxyl of ribose-5-phosphate (Rib-5-P). The protein is Ribose-phosphate pyrophosphokinase of Parasynechococcus marenigrum (strain WH8102).